The sequence spans 174 residues: Guided entry of tail-anchored proteins factor 1 (174 aa).

Topologically, residues 1 to 8 (MSASETDR) are lumenal. A helical transmembrane segment spans residues 9 to 29 (WAWLLVLCFVFGCNVLRILLP). The Cytoplasmic portion of the chain corresponds to 30 to 99 (TLSSFISRVL…VKARTAQLAK (70 aa)). Positions 39 to 94 (LQKDAEQESQMRAEIQSMKQELSTVNMMDEFARYARLERKINKMTDKLKTHVKART) form a coiled coil. The tract at residues 39–97 (LQKDAEQESQMRAEIQSMKQELSTVNMMDEFARYARLERKINKMTDKLKTHVKARTAQL) is interaction with GET3/TRC40. The helical transmembrane segment at 100–120 (IKWFISVAFYVLQAALMISLI) threads the bilayer. The Lumenal segment spans residues 121-148 (WKYYSVPVAVVPSKWITPLDRLVAFPTR). Residues 149–169 (VAGGIGVTCWILVCNKVVAII) traverse the membrane as a helical segment. Topologically, residues 170–174 (LHPFS) are cytoplasmic.

The protein belongs to the WRB/GET1 family. Component of the Golgi to ER traffic (GET) complex, which is composed of GET1, CAMLG/GET2 and GET3. Within the complex, GET1 and CAMLG form a heterotetramer which is stabilized by phosphatidylinositol binding and which binds to the GET3 homodimer. Interacts with CAMLG/GET2 (via C-terminus). GET3 shows a higher affinity for CAMLG than for GET1.

The protein resides in the endoplasmic reticulum membrane. Required for the post-translational delivery of tail-anchored (TA) proteins to the endoplasmic reticulum. Together with CAMLG/GET2, acts as a membrane receptor for soluble GET3/TRC40, which recognizes and selectively binds the transmembrane domain of TA proteins in the cytosol. Required to ensure correct topology and ER insertion of CAMLG. The chain is Guided entry of tail-anchored proteins factor 1 from Rattus norvegicus (Rat).